A 404-amino-acid chain; its full sequence is Alanyl-tRNA editing protein AlaX-L (404 aa).

Zn(2+) contacts are provided by His104, His108, Cys202, and His206.

The protein belongs to the class-II aminoacyl-tRNA synthetase family. Editing domain AlaX-L subfamily. Zn(2+) is required as a cofactor.

It is found in the cytoplasm. Functions in trans to edit the amino acid moiety from mischarged charged tRNA(Ala). The polypeptide is Alanyl-tRNA editing protein AlaX-L (alaXL) (Pyrococcus horikoshii (strain ATCC 700860 / DSM 12428 / JCM 9974 / NBRC 100139 / OT-3)).